A 212-amino-acid chain; its full sequence is RNA chaperone ProQ (212 aa).

Residues 107-153 (QDKAKAKRVAQAKSANPAAKTAKKPVKKPVAKRPKQTQSSKPAKEPV) form a disordered region. The segment covering 117 to 126 (QAKSANPAAK) has biased composition (low complexity). Residues 127–141 (TAKKPVKKPVAKRPK) show a composition bias toward basic residues.

The protein belongs to the ProQ family.

Its subcellular location is the cytoplasm. Functionally, RNA chaperone with significant RNA binding, RNA strand exchange and RNA duplexing activities. The protein is RNA chaperone ProQ of Shewanella halifaxensis (strain HAW-EB4).